Reading from the N-terminus, the 451-residue chain is Probable glycine dehydrogenase (decarboxylating) subunit 1 (451 aa).

Belongs to the GcvP family. N-terminal subunit subfamily. In terms of assembly, the glycine cleavage system is composed of four proteins: P, T, L and H. In this organism, the P 'protein' is a heterodimer of two subunits.

It catalyses the reaction N(6)-[(R)-lipoyl]-L-lysyl-[glycine-cleavage complex H protein] + glycine + H(+) = N(6)-[(R)-S(8)-aminomethyldihydrolipoyl]-L-lysyl-[glycine-cleavage complex H protein] + CO2. In terms of biological role, the glycine cleavage system catalyzes the degradation of glycine. The P protein binds the alpha-amino group of glycine through its pyridoxal phosphate cofactor; CO(2) is released and the remaining methylamine moiety is then transferred to the lipoamide cofactor of the H protein. The protein is Probable glycine dehydrogenase (decarboxylating) subunit 1 of Thioalkalivibrio sulfidiphilus (strain HL-EbGR7).